The chain runs to 1073 residues: Probable lipase MIL1 (1073 aa).

2 disordered regions span residues 1–151 (MSDS…AVSS) and 163–190 (LTSK…KSVN). Composition is skewed to basic and acidic residues over residues 54–81 (QAKE…EAGK) and 101–121 (GIDR…HDTD). Positions 143-147 (WQEMP) match the APM2-interacting WQEMP motif motif. 3 N-linked (GlcNAc...) asparagine glycosylation sites follow: asparagine 190, asparagine 229, and asparagine 236. The segment at 230–267 (SSQTSVNLTSSPSTTSLNNEKNNDDDDDDSYDEYEDDV) is disordered. Over residues 233 to 249 (TSVNLTSSPSTTSLNNE) the composition is skewed to low complexity. Positions 252–267 (NDDDDDDSYDEYEDDV) are enriched in acidic residues. Asparagine 280 carries N-linked (GlcNAc...) asparagine glycosylation. A helical transmembrane segment spans residues 292–312 (FAYVGAINILANQMCTNLATL). The segment at 385 to 448 (NPWENDRDHE…SDVPGKVLDP (64 aa)) is disordered. A compositionally biased stretch (polar residues) spans 404–427 (RMSPNEQNGSVQASTPDPEQSATP). Residue asparagine 411 is glycosylated (N-linked (GlcNAc...) asparagine). Serine 435 carries the phosphoserine modification. A helical membrane pass occupies residues 457-477 (LNIDVAWTIICDLFLICLQSS). Asparagine 495 is a glycosylation site (N-linked (GlcNAc...) asparagine). Transmembrane regions (helical) follow at residues 553 to 573 (LVLG…IAAG) and 577 to 597 (IGIT…VVAV). N-linked (GlcNAc...) asparagine glycosylation is present at asparagine 726. A helical transmembrane segment spans residues 818–838 (WFLAYLFRAAAGGFSAVMGIS). N-linked (GlcNAc...) asparagine glycosylation is present at asparagine 850. Disordered stretches follow at residues 942–968 (GRDM…EGIA) and 1010–1073 (KEVE…PDDI). A compositionally biased stretch (pro residues) spans 1027–1037 (PSTPKINPPQS). Serine 1037 carries the phosphoserine modification.

Belongs to the TMCO4 family. In terms of assembly, interacts with RPP0. Interacts with APM2.

It is found in the golgi apparatus membrane. It localises to the early endosome membrane. The protein localises to the cytoplasmic vesicle. Its subcellular location is the clathrin-coated vesicle membrane. Functionally, probable lipase that recruits the AP-1-related (AP-1R) complex to membranes via interaction with APM2. The AP-1R complex is an adapter protein complex that mediates of cargo protein SNC1 sorting in clathrin-coated vesicles. The sequence is that of Probable lipase MIL1 from Saccharomyces cerevisiae (strain ATCC 204508 / S288c) (Baker's yeast).